We begin with the raw amino-acid sequence, 82 residues long: Defensin-like protein 75 (82 aa).

The signal sequence occupies residues 1 to 26; that stretch reads MAKIKSLDVITVAIILLLVIADQATA. 4 disulfides stabilise this stretch: C33–C66, C37–C55, C41–C64, and C45–C65.

This sequence belongs to the DEFL family.

It localises to the secreted. This is Defensin-like protein 75 (LCR45) from Arabidopsis thaliana (Mouse-ear cress).